The sequence spans 126 residues: Large ribosomal subunit protein uL29 (126 aa).

Belongs to the universal ribosomal protein uL29 family.

The protein is Large ribosomal subunit protein uL29 (rpl35) of Dictyostelium discoideum (Social amoeba).